A 117-amino-acid polypeptide reads, in one-letter code: Large ribosomal subunit protein bL20 (117 aa).

It belongs to the bacterial ribosomal protein bL20 family.

Its function is as follows. Binds directly to 23S ribosomal RNA and is necessary for the in vitro assembly process of the 50S ribosomal subunit. It is not involved in the protein synthesizing functions of that subunit. In Photobacterium profundum (strain SS9), this protein is Large ribosomal subunit protein bL20.